We begin with the raw amino-acid sequence, 447 residues long: Beclin-1 (447 aa).

The short motif at 105 to 124 is the BH3 element; the sequence is TMENLSRRLKVTSNLFDIMS. Positions 109–156 are interaction with BCL2 and BCL2L1 isoform Bcl-X(L); it reads LSRRLKVTSNLFDIMSGQTDIDHPLCEECTDTLLDHLDTQLNITENEC. The stretch at 140–214 forms a coiled coil; sequence TLLDHLDTQL…VAKELDEGRN (75 aa). Residues 242–447 form an evolutionary conserved domain (ECD) region; that stretch reads DDLKSVDNQM…AWVSSQFYNR (206 aa). A Glycyl lysine isopeptide (Lys-Gly) (interchain with G-Cter in ubiquitin) cross-link involves residue Lys399. Positions 422 to 447 are required for membrane-association; the sequence is WTKALKFMLTNLKWGLAWVSSQFYNR.

The protein belongs to the beclin family. Component of the PI3K (PI3KC3/PI3K-III/class III phosphatidylinositol 3-kinase) complex. Interacts with the poly-Gln domain of ATXN3; the interaction causes deubiquitination at Lys-399 and stabilizes BECN1. Post-translationally, polyubiquitinated at Lys-399 with 'Lys-48'-linkages. 'Lys-48'-linked polyubiquitination of Lys-399 leads to degradation. Deubiquitinated by ATXN3, leading to stabilization.

It is found in the cytoplasm. It localises to the golgi apparatus. Its subcellular location is the trans-Golgi network membrane. The protein localises to the endosome membrane. The protein resides in the endoplasmic reticulum membrane. It is found in the mitochondrion membrane. It localises to the endosome. Its subcellular location is the cytoplasmic vesicle. The protein localises to the autophagosome. In terms of biological role, plays a central role in autophagy. Acts as a core subunit of different PI3K complex forms that mediate formation of phosphatidylinositol 3-phosphate and are believed to play a role in multiple membrane trafficking pathways: PI3KC3-C1 is involved in initiation of autophagosomes and PI3KC3-C2 in maturation of autophagosomes and endocytosis. Involved in regulation of degradative endocytic trafficking and required for the abscission step in cytokinesis, probably in the context of PI3KC3-C2. Essential for the formation of PI3KC3-C2 but not PI3KC3-C1 PI3K complex forms. Involved in endocytosis including endosome formation in neuronal cells. In Danio rerio (Zebrafish), this protein is Beclin-1 (becn1).